The chain runs to 37 residues: MKVRTSVKPICDKCKVIKRNGIVRIICTNPKHKQRQG.

It belongs to the bacterial ribosomal protein bL36 family.

The protein is Large ribosomal subunit protein bL36 of Treponema denticola (strain ATCC 35405 / DSM 14222 / CIP 103919 / JCM 8153 / KCTC 15104).